The primary structure comprises 679 residues: Stress-70 protein, mitochondrial (679 aa).

The N-terminal 46 residues, 1–46 (MISASRAAAARLVGTTASRSPAAARHQDGWNGLSHEAFRFVSRRDY), are a transit peptide targeting the mitochondrion. The interaction with NFS1 stretch occupies residues 1–432 (MISASRAAAA…IQGGVLAGDV (432 aa)). The ADP site is built by Thr63 and Asn64. The nucleotide-binding domain (NBD) stretch occupies residues 63–431 (TNSCVAVMEG…AIQGGVLAGD (369 aa)). Lys76 carries the N6-acetyllysine modification. Residue Thr87 is modified to Phosphothreonine. Residues Lys135 and Lys138 each carry the N6-acetyllysine; alternate modification. 2 positions are modified to N6-succinyllysine; alternate: Lys135 and Lys138. Lys143 carries the post-translational modification N6-acetyllysine. Lys206 is modified (N6-acetyllysine; alternate). Residue Lys206 is modified to N6-succinyllysine; alternate. Lys206 is modified (N6-malonyllysine; alternate). Residues Lys234 and Lys288 each carry the N6-acetyllysine modification. Lys300 is modified (N6-acetyllysine; alternate). An N6-succinyllysine; alternate modification is found at Lys300. 3 residues coordinate ADP: Glu313, Lys316, and Ser320. At Lys360 the chain carries N6-acetyllysine; alternate. Residue Lys360 is modified to N6-succinyllysine; alternate. Lys368 is subject to N6-succinyllysine. Residues Gly388 and Arg391 each coordinate ADP. Lys394 carries the post-translational modification N6-succinyllysine. At Ser408 the chain carries Phosphoserine. The interdomain linker stretch occupies residues 432–441 (VTDVLLLDVT). The interval 432-679 (VTDVLLLDVT…QKEDQKEEKQ (248 aa)) is interaction with FXN and ISCU. Residues 442–679 (PLSLGIETLG…QKEDQKEEKQ (238 aa)) are substrate-binding domain (SBD). Arg513 carries the omega-N-methylarginine modification. N6-acetyllysine; alternate is present on residues Lys567 and Lys600. N6-succinyllysine; alternate is present on residues Lys567 and Lys600. Lys610 carries the post-translational modification N6-succinyllysine. At Lys612 the chain carries N6-acetyllysine. Lys646 is modified (N6-acetyllysine; alternate). Lys646 carries the N6-succinyllysine; alternate modification. The disordered stretch occupies residues 655-679 (MASEREGSGSSSTGEQKEDQKEEKQ). Residues 669–679 (EQKEDQKEEKQ) are compositionally biased toward basic and acidic residues.

The protein belongs to the heat shock protein 70 family. Interacts strongly with the intermediate form of FXN and weakly with its mature form. Interacts with HSCB. Associates with the mitochondrial contact site and cristae organizing system (MICOS) complex, composed of at least MICOS10/MIC10, CHCHD3/MIC19, CHCHD6/MIC25, APOOL/MIC27, IMMT/MIC60, APOO/MIC23/MIC26 and QIL1/MIC13. This complex was also known under the names MINOS or MitOS complex. The MICOS complex associates with mitochondrial outer membrane proteins SAMM50, MTX1, MTX2 and DNAJC11, mitochondrial inner membrane protein TMEM11 and with HSPA9. Interacts with DNLZ, the interaction is required to prevent self-aggregation. Interacts with TESPA1. Interacts with PDPN. Interacts with NFU1, NFS1 and ISCU. Interacts with TP53; the interaction promotes TP53 degradation. Interacts (via SBD domain) with UBXN2A; the interaction with UBXN2A inhibits HSPA9 interaction with and degradation of TP53, thereby promotes TP53 translocation to the nucleus. Interacts with ITPR1 AND VDAC1; this interaction couples ITPR1 to VDAC1. Component of the TIM23 mitochondrial inner membrane pre-sequence translocase complex.

The protein resides in the mitochondrion. Its subcellular location is the nucleus. It is found in the nucleolus. It localises to the cytoplasm. The protein localises to the mitochondrion matrix. It carries out the reaction ATP + H2O = ADP + phosphate + H(+). The chaperone activity is regulated by ATP-induced allosteric coupling of the nucleotide-binding (NBD) and substrate-binding (SBD) domains. ATP binding in the nucleotide-binding pocket (NBP) leads to a conformational change in the NBD, which is transferred through the interdomain linker (IDL) to the substrate-binding domain (SBD). This elicits a reduced substrate affinity and a faster substrate exchange rate. Upon hydrolysis of ATP to ADP, the protein undergoes a conformational change that increases its affinity for substrate proteins. It cycles through repeated phases of ATP hydrolysis and nucleotide exchange, facilitating repeated cycles of substrate binding and release. Functions in collaboration with co-chaperones. Functions with the co-chaperone, DNLZ, to maintain solubility and regulate ATP hydrolysis. Nucleotide exchange factors, GRPEL1 and GRPEL2, accelerate nucleotide exchange. Mitochondrial chaperone that plays a key role in mitochondrial protein import, folding, and assembly. Plays an essential role in the protein quality control system, the correct folding of proteins, the re-folding of misfolded proteins, and the targeting of proteins for subsequent degradation. These processes are achieved through cycles of ATP binding, ATP hydrolysis, and ADP release, mediated by co-chaperones. In mitochondria, it associates with the TIM (translocase of the inner membrane) protein complex to assist in the import and folding of mitochondrial proteins. Plays an important role in mitochondrial iron-sulfur cluster (ISC) biogenesis, interacts with and stabilizes ISC cluster assembly proteins FXN, NFU1, NFS1 and ISCU. Regulates erythropoiesis via stabilization of ISC assembly. Regulates mitochondrial calcium-dependent apoptosis by coupling two calcium channels, ITPR1 and VDAC1, at the mitochondria-associated endoplasmic reticulum (ER) membrane to facilitate calcium transport from the ER lumen to the mitochondria intermembrane space, providing calcium for the downstream calcium channel MCU, which releases it into the mitochondrial matrix. Although primarily located in the mitochondria, it is also found in other cellular compartments. In the cytosol, it associates with proteins involved in signaling, apoptosis, or senescence. It may play a role in cell cycle regulation via its interaction with and promotion of degradation of TP53. May play a role in the control of cell proliferation and cellular aging. Protects against reactive oxygen species (ROS). Extracellular HSPA9 plays a cytoprotective role by preventing cell lysis following immune attack by the membrane attack complex by disrupting formation of the complex. This chain is Stress-70 protein, mitochondrial, found in Rattus norvegicus (Rat).